The following is an 851-amino-acid chain: DNA mismatch repair protein MutS (851 aa).

602 to 609 serves as a coordination point for ATP; it reads GPNMSGKS.

This sequence belongs to the DNA mismatch repair MutS family.

In terms of biological role, this protein is involved in the repair of mismatches in DNA. It is possible that it carries out the mismatch recognition step. This protein has a weak ATPase activity. This is DNA mismatch repair protein MutS from Streptococcus pyogenes serotype M12 (strain MGAS2096).